Here is a 207-residue protein sequence, read N- to C-terminus: Superoxide dismutase [Mn] (207 aa).

Residues histidine 30, histidine 78, aspartate 166, and histidine 170 each contribute to the Mn(2+) site.

Belongs to the iron/manganese superoxide dismutase family. In terms of assembly, homodimer. The cofactor is Mn(2+).

The catalysed reaction is 2 superoxide + 2 H(+) = H2O2 + O2. Its function is as follows. Destroys superoxide anion radicals which are normally produced within the cells and which are toxic to biological systems. The polypeptide is Superoxide dismutase [Mn] (sodA) (Chlamydia pneumoniae (Chlamydophila pneumoniae)).